A 156-amino-acid polypeptide reads, in one-letter code: ATP synthase subunit b (156 aa).

Residues 12-32 (VAFFIFVLFCMKFVWPPVIAA) form a helical membrane-spanning segment.

The protein belongs to the ATPase B chain family. As to quaternary structure, F-type ATPases have 2 components, F(1) - the catalytic core - and F(0) - the membrane proton channel. F(1) has five subunits: alpha(3), beta(3), gamma(1), delta(1), epsilon(1). F(0) has three main subunits: a(1), b(2) and c(10-14). The alpha and beta chains form an alternating ring which encloses part of the gamma chain. F(1) is attached to F(0) by a central stalk formed by the gamma and epsilon chains, while a peripheral stalk is formed by the delta and b chains.

It is found in the cell inner membrane. In terms of biological role, f(1)F(0) ATP synthase produces ATP from ADP in the presence of a proton or sodium gradient. F-type ATPases consist of two structural domains, F(1) containing the extramembraneous catalytic core and F(0) containing the membrane proton channel, linked together by a central stalk and a peripheral stalk. During catalysis, ATP synthesis in the catalytic domain of F(1) is coupled via a rotary mechanism of the central stalk subunits to proton translocation. Functionally, component of the F(0) channel, it forms part of the peripheral stalk, linking F(1) to F(0). This is ATP synthase subunit b from Pseudomonas aeruginosa (strain UCBPP-PA14).